Here is a 399-residue protein sequence, read N- to C-terminus: 5'-C-glycyluridine monooxygenase-decarboxylase (399 aa).

Position 179 (threonine 179) interacts with phosphate. N6-(pyridoxal phosphate)lysine is present on lysine 230. Arginine 318, arginine 322, arginine 353, and arginine 367 together coordinate phosphate.

The protein belongs to the SelA family. As to quaternary structure, homooctamer; tetramer of homodimers. Pyridoxal 5'-phosphate is required as a cofactor.

It catalyses the reaction (5'S,6'R)-C-glycyluridine + O2 = uridine-5'-carboxamide + CO2 + H2O. Its pathway is antibiotic biosynthesis. With respect to regulation, activity is dependent on phosphate. Functionally, monooxygenase-decarboxylase involved in the biosynthesis of the capuramycin-type nucleoside antibiotic A-503083. Catalyzes the oxidative decarboxylation of 5'-C-glycyluridine (GlyU) to uridine-5'-carboxamide (CarU). Is stereospecific for the (5'S,6'R)-diastereomer of GlyU. Directly incorporates a single oxygen atom from O(2) into the product CarU. This is 5'-C-glycyluridine monooxygenase-decarboxylase from Streptomyces sp.